The following is a 255-amino-acid chain: MRFDVITLFPELFTPFLASGVTRRAYATGLVDVRFWNPRDYAEGNYRRVDDRPFGGGPGMVMMAEPLERCLRAIRADRGEAPEAVAPLVMFSPIGRRLDHDGVAGWAAGNGAVLLCGRYEGVDQRFVDAHVDVQLSLGDFVLSGGEIPAMALLDAVARLQPGVLNDAGSHQEDSFNAALDGLLDCPHYTRPESWQGQAVPAALLSGHHAQIERWRRDQRLAVTARHRPDLVEAARVAGRLDRADEAVLAKLNGLL.

S-adenosyl-L-methionine-binding positions include glycine 117 and leucine 137–leucine 142.

The protein belongs to the RNA methyltransferase TrmD family. In terms of assembly, homodimer.

It is found in the cytoplasm. It catalyses the reaction guanosine(37) in tRNA + S-adenosyl-L-methionine = N(1)-methylguanosine(37) in tRNA + S-adenosyl-L-homocysteine + H(+). Its function is as follows. Specifically methylates guanosine-37 in various tRNAs. The sequence is that of tRNA (guanine-N(1)-)-methyltransferase from Paracidovorax citrulli (strain AAC00-1) (Acidovorax citrulli).